The primary structure comprises 615 residues: TORTIFOLIA1-like protein 3 (615 aa).

5 HEAT repeats span residues 44-81, 86-123, 125-163, 168-205, and 213-250; these read GNLQ…SLPL, PFLS…RTTK, PFYS…SASD, RLGQ…AGGL, and GGLK…MERN. A disordered region spans residues 288–446; the sequence is VPDLSEEVSP…HHVLSENPNS (159 aa). Residues 318–347 show a composition bias toward polar residues; the sequence is RVGSTPAKSRTHLVNRSTPPGSSLATTARK. A compositionally biased stretch (basic and acidic residues) spans 391-406; it reads DEQHCDHDENAKETSH. Residues 407-426 are compositionally biased toward polar residues; sequence SSHNTVQKLGGVSSSLNGNI. Residue Ser456 is modified to Phosphoserine.

In Arabidopsis thaliana (Mouse-ear cress), this protein is TORTIFOLIA1-like protein 3.